A 322-amino-acid chain; its full sequence is uncharacterized protein (322 aa).

It to M.jannaschii MJ0640 and MJ0799.

This is an uncharacterized protein from Synechocystis sp. (strain ATCC 27184 / PCC 6803 / Kazusa).